A 64-amino-acid polypeptide reads, in one-letter code: Large ribosomal subunit protein uL30 (64 aa).

The protein belongs to the universal ribosomal protein uL30 family. As to quaternary structure, part of the 50S ribosomal subunit.

The protein is Large ribosomal subunit protein uL30 of Methylorubrum extorquens (strain CM4 / NCIMB 13688) (Methylobacterium extorquens).